A 212-amino-acid chain; its full sequence is Thiamine-phosphate synthase (212 aa).

4-amino-2-methyl-5-(diphosphooxymethyl)pyrimidine contacts are provided by residues 35 to 39 (QLRRK) and Asn67. Mg(2+) is bound by residues Asp68 and Asp87. Ser106 is a 4-amino-2-methyl-5-(diphosphooxymethyl)pyrimidine binding site. 132–134 (TGS) contributes to the 2-[(2R,5Z)-2-carboxy-4-methylthiazol-5(2H)-ylidene]ethyl phosphate binding site. Residue Lys135 coordinates 4-amino-2-methyl-5-(diphosphooxymethyl)pyrimidine. 2-[(2R,5Z)-2-carboxy-4-methylthiazol-5(2H)-ylidene]ethyl phosphate contacts are provided by residues Gly163 and 183–184 (IS).

This sequence belongs to the thiamine-phosphate synthase family. Mg(2+) is required as a cofactor.

The catalysed reaction is 2-[(2R,5Z)-2-carboxy-4-methylthiazol-5(2H)-ylidene]ethyl phosphate + 4-amino-2-methyl-5-(diphosphooxymethyl)pyrimidine + 2 H(+) = thiamine phosphate + CO2 + diphosphate. It catalyses the reaction 2-(2-carboxy-4-methylthiazol-5-yl)ethyl phosphate + 4-amino-2-methyl-5-(diphosphooxymethyl)pyrimidine + 2 H(+) = thiamine phosphate + CO2 + diphosphate. The enzyme catalyses 4-methyl-5-(2-phosphooxyethyl)-thiazole + 4-amino-2-methyl-5-(diphosphooxymethyl)pyrimidine + H(+) = thiamine phosphate + diphosphate. It participates in cofactor biosynthesis; thiamine diphosphate biosynthesis; thiamine phosphate from 4-amino-2-methyl-5-diphosphomethylpyrimidine and 4-methyl-5-(2-phosphoethyl)-thiazole: step 1/1. Functionally, condenses 4-methyl-5-(beta-hydroxyethyl)thiazole monophosphate (THZ-P) and 2-methyl-4-amino-5-hydroxymethyl pyrimidine pyrophosphate (HMP-PP) to form thiamine monophosphate (TMP). This Chlorobium luteolum (strain DSM 273 / BCRC 81028 / 2530) (Pelodictyon luteolum) protein is Thiamine-phosphate synthase.